We begin with the raw amino-acid sequence, 467 residues long: Chromosomal replication initiator protein DnaA (467 aa).

A domain I, interacts with DnaA modulators region spans residues 1–84; the sequence is MDISLDQLWD…LQVEFSVSPH (84 aa). A domain II region spans residues 84–125; it reads HASVEAEPPSRAISPTSGRAGSLPASTTLGLEVGGSLPMRAP. The interval 89–108 is disordered; sequence AEPPSRAISPTSGRAGSLPA. Polar residues predominate over residues 96-108; sequence ISPTSGRAGSLPA. The domain III, AAA+ region stretch occupies residues 126–342; the sequence is DLNPKYSFSR…GALIRAVAYV (217 aa). ATP-binding residues include glycine 170, glycine 172, lysine 173, and threonine 174. Positions 343 to 467 are domain IV, binds dsDNA; sequence SISGLPMSVE…LRVVANSRSS (125 aa).

It belongs to the DnaA family. In terms of assembly, oligomerizes as a right-handed, spiral filament on DNA at oriC.

Its subcellular location is the cytoplasm. Functionally, plays an essential role in the initiation and regulation of chromosomal replication. ATP-DnaA binds to the origin of replication (oriC) to initiate formation of the DNA replication initiation complex once per cell cycle. Binds the DnaA box (a 9 base pair repeat at the origin) and separates the double-stranded (ds)DNA. Forms a right-handed helical filament on oriC DNA; dsDNA binds to the exterior of the filament while single-stranded (ss)DNA is stabiized in the filament's interior. The ATP-DnaA-oriC complex binds and stabilizes one strand of the AT-rich DNA unwinding element (DUE), permitting loading of DNA polymerase. After initiation quickly degrades to an ADP-DnaA complex that is not apt for DNA replication. Binds acidic phospholipids. This is Chromosomal replication initiator protein DnaA from Synechococcus sp. (strain JA-2-3B'a(2-13)) (Cyanobacteria bacterium Yellowstone B-Prime).